The following is a 276-amino-acid chain: NH(3)-dependent NAD(+) synthetase (276 aa).

Residue 51–58 (GISGGVDS) participates in ATP binding. Position 57 (aspartate 57) interacts with Mg(2+). Arginine 148 is a binding site for deamido-NAD(+). Threonine 168 is a binding site for ATP. Mg(2+) is bound at residue glutamate 173. Deamido-NAD(+) contacts are provided by lysine 181 and aspartate 188. 2 residues coordinate ATP: lysine 197 and threonine 219. 268–269 (HK) serves as a coordination point for deamido-NAD(+).

The protein belongs to the NAD synthetase family. As to quaternary structure, homodimer.

The catalysed reaction is deamido-NAD(+) + NH4(+) + ATP = AMP + diphosphate + NAD(+) + H(+). The protein operates within cofactor biosynthesis; NAD(+) biosynthesis; NAD(+) from deamido-NAD(+) (ammonia route): step 1/1. Its function is as follows. Catalyzes the ATP-dependent amidation of deamido-NAD to form NAD. Uses ammonia as a nitrogen source. This Streptomyces coelicolor (strain ATCC BAA-471 / A3(2) / M145) protein is NH(3)-dependent NAD(+) synthetase.